The sequence spans 629 residues: uncharacterized protein (629 aa).

4 disordered regions span residues 101 to 126, 172 to 209, 315 to 339, and 448 to 468; these read SWKKSSSHPKSKEVSNGLLKVSTPPT, PQKDNQGFSKSKHLSTYEGETENGFSTSTEEEEEEEED, STPKKSFGQTPRIKTELSESPNSQR, and GENTANNGYGPQTLNETSEEP. Residues 200–209 are compositionally biased toward acidic residues; it reads TEEEEEEEED. Phosphoserine is present on S334. A compositionally biased stretch (polar residues) spans 448–463; the sequence is GENTANNGYGPQTLNE.

This is an uncharacterized protein from Schizosaccharomyces pombe (strain 972 / ATCC 24843) (Fission yeast).